The primary structure comprises 444 residues: Methylenetetrahydrofolate--tRNA-(uracil-5-)-methyltransferase TrmFO (444 aa).

10-15 (GAGLAG) is an FAD binding site.

It belongs to the MnmG family. TrmFO subfamily. FAD is required as a cofactor.

The protein localises to the cytoplasm. It carries out the reaction uridine(54) in tRNA + (6R)-5,10-methylene-5,6,7,8-tetrahydrofolate + NADH + H(+) = 5-methyluridine(54) in tRNA + (6S)-5,6,7,8-tetrahydrofolate + NAD(+). It catalyses the reaction uridine(54) in tRNA + (6R)-5,10-methylene-5,6,7,8-tetrahydrofolate + NADPH + H(+) = 5-methyluridine(54) in tRNA + (6S)-5,6,7,8-tetrahydrofolate + NADP(+). Functionally, catalyzes the folate-dependent formation of 5-methyl-uridine at position 54 (M-5-U54) in all tRNAs. This Streptococcus pneumoniae (strain 70585) protein is Methylenetetrahydrofolate--tRNA-(uracil-5-)-methyltransferase TrmFO.